Consider the following 212-residue polypeptide: Imidazole glycerol phosphate synthase subunit HisH 2 (212 aa).

The region spanning 3-212 (RVAIIDYGIN…LMSNFLQWNP (210 aa)) is the Glutamine amidotransferase type-1 domain. C82 acts as the Nucleophile in catalysis. Residues H192 and E194 contribute to the active site.

As to quaternary structure, heterodimer of HisH and HisF.

It is found in the cytoplasm. It carries out the reaction 5-[(5-phospho-1-deoxy-D-ribulos-1-ylimino)methylamino]-1-(5-phospho-beta-D-ribosyl)imidazole-4-carboxamide + L-glutamine = D-erythro-1-(imidazol-4-yl)glycerol 3-phosphate + 5-amino-1-(5-phospho-beta-D-ribosyl)imidazole-4-carboxamide + L-glutamate + H(+). It catalyses the reaction L-glutamine + H2O = L-glutamate + NH4(+). It functions in the pathway amino-acid biosynthesis; L-histidine biosynthesis; L-histidine from 5-phospho-alpha-D-ribose 1-diphosphate: step 5/9. Functionally, IGPS catalyzes the conversion of PRFAR and glutamine to IGP, AICAR and glutamate. The HisH subunit provides the glutamine amidotransferase activity that produces the ammonia necessary to HisF for the synthesis of IGP and AICAR. The sequence is that of Imidazole glycerol phosphate synthase subunit HisH 2 from Nitrobacter winogradskyi (strain ATCC 25391 / DSM 10237 / CIP 104748 / NCIMB 11846 / Nb-255).